Here is a 579-residue protein sequence, read N- to C-terminus: Arginine--tRNA ligase (579 aa).

The 'HIGH' region signature appears at 127-137 (PNLAKEMHVGH).

Belongs to the class-I aminoacyl-tRNA synthetase family. In terms of assembly, monomer.

It localises to the cytoplasm. It carries out the reaction tRNA(Arg) + L-arginine + ATP = L-arginyl-tRNA(Arg) + AMP + diphosphate. In Stutzerimonas stutzeri (strain A1501) (Pseudomonas stutzeri), this protein is Arginine--tRNA ligase.